A 2316-amino-acid polypeptide reads, in one-letter code: Receptor-type tyrosine-protein phosphatase zeta (2316 aa).

A signal peptide spans M1–G24. Residues Y25 to K1637 lie on the Extracellular side of the membrane. The Alpha-carbonic anhydrase domain occupies I36–Y300. 2 disulfide bridges follow: C56-C240 and C133-C264. N-linked (GlcNAc...) asparagine glycans are attached at residues N105, N134, N223, N232, N324, N381, and N497. The region spanning E314–A413 is the Fibronectin type-III domain. 2 disordered regions span residues Y433–S499 and L518–S537. A glycan (N-linked (GlcNAc...) asparagine) is linked at N552. 2 positions are modified to phosphoserine: S572 and S576. Disordered stretches follow at residues K586–A624 and R636–H720. The segment covering D592–S602 has biased composition (low complexity). S595 carries an O-linked (Xyl...) (chondroitin sulfate) serine glycan. The segment covering T603–T621 has biased composition (polar residues). N610 is a glycosylation site (N-linked (GlcNAc...) asparagine). The residue at position 645 (S645) is a Phosphoserine; alternate. An O-linked (Xyl...) (chondroitin sulfate) serine; alternate glycan is attached at S645. The residue at position 647 (S647) is a Phosphoserine. Residues T666 to G675 show a composition bias toward polar residues. Residue N685 is glycosylated (N-linked (GlcNAc...) asparagine). Positions E699–P711 are enriched in polar residues. N786 carries an N-linked (GlcNAc...) asparagine glycan. S1005 carries an O-linked (Xyl...) (chondroitin sulfate) serine glycan. N-linked (GlcNAc...) asparagine glycosylation is found at N1025 and N1058. 4 disordered regions span residues Q1141–S1172, K1204–S1228, L1401–E1521, and T1545–H1622. A compositionally biased stretch (polar residues) spans L1152–S1172. The span at L1401–S1413 shows a compositional bias: polar residues. Positions E1425–D1439 are enriched in acidic residues. An N-linked (GlcNAc...) asparagine glycan is attached at N1463. The segment covering D1464–P1478 has biased composition (polar residues). O-linked (Xyl...) (chondroitin sulfate) serine glycans are attached at residues S1550 and S1552. Polar residues-rich tracts occupy residues G1555–F1569 and P1595–V1609. An N-linked (GlcNAc...) asparagine glycan is attached at N1563. Residues S1610 to S1621 show a composition bias toward low complexity. Residues N1611 and N1619 are each glycosylated (N-linked (GlcNAc...) asparagine). The chain crosses the membrane as a helical span at residues A1638 to W1663. Residues R1664–V2316 lie on the Cytoplasmic side of the membrane. Phosphothreonine occurs at positions 1685 and 1688. 2 Tyrosine-protein phosphatase domains span residues F1718–A1993 and L2024–L2283. Residues D1902, C1934–R1940, and Q1978 contribute to the substrate site. The active-site Phosphocysteine intermediate is C1934. Position 2056 is a phosphoserine (S2056).

This sequence belongs to the protein-tyrosine phosphatase family. Receptor class 5 subfamily. In terms of assembly, interacts with tenascin. Interacts with N-CAM and NG-CAM. The carbonic-anhydrase like domain interacts with CNTN1 (contactin). Interacts with PTN. Interaction with PTN promotes formation of homooligomers; oligomerization impairs phosphatase activity. Interacts (via chondroitin sulfate chains) with MDK (via C-terminal); this interaction is inhibited by PTN; this interaction promotes neuronal migration. Nervous tissue specific.

Its subcellular location is the cell membrane. The protein resides in the secreted. The catalysed reaction is O-phospho-L-tyrosyl-[protein] + H2O = L-tyrosyl-[protein] + phosphate. Its function is as follows. Protein tyrosine phosphatase that negatively regulates oligodendrocyte precursor proliferation in the embryonic spinal cord. Required for normal differentiation of the precursor cells into mature, fully myelinating oligodendrocytes. May play a role in protecting oligondendrocytes against apoptosis. May play a role in the establishment of contextual memory, probably via the dephosphorylation of proteins that are part of important signaling cascades. Isoform 3 (phosphacan), previously designated 3F8 chondroitin sulfate proteoglycan or 3H1 keratan sulfate proteoglycan depending on the glycosylation status, is a soluble nervous tissue-specific proteoglycan. It is synthesized by glia and binds to neurons and to the neural cell adhesion molecules tenascin, N-CAM or NG-CAM but not to laminin and fibronectin. Phosphacan acts as a potent inhibitor of cell adhesion and neurite outgrowth. The protein is Receptor-type tyrosine-protein phosphatase zeta (Ptprz1) of Rattus norvegicus (Rat).